Reading from the N-terminus, the 275-residue chain is Glucosamine-6-phosphate deaminase 2 (275 aa).

Catalysis depends on Asp72, which acts as the Proton acceptor; for enolization step. The stretch at 103–131 forms a coiled coil; that stretch reads NAHILDGNASDLQAECEDFERKIKEAGGI. The For ring-opening step role is filled by Asp141. His143 (proton acceptor; for ring-opening step) is an active-site residue. Glu148 functions as the For ring-opening step in the catalytic mechanism.

The protein belongs to the glucosamine/galactosamine-6-phosphate isomerase family. In terms of assembly, homohexamer.

It localises to the cytoplasm. The catalysed reaction is alpha-D-glucosamine 6-phosphate + H2O = beta-D-fructose 6-phosphate + NH4(+). Catalyzes the reversible conversion of alpha-D-glucosamine 6-phosphate (GlcN-6P) into beta-D-fructose 6-phosphate (Fru-6P) and ammonium ion, a regulatory reaction step in de novo uridine diphosphate-N-acetyl-alpha-D-glucosamine (UDP-GlcNAc) biosynthesis via hexosamine pathway. The sequence is that of Glucosamine-6-phosphate deaminase 2 from Xenopus tropicalis (Western clawed frog).